The chain runs to 704 residues: Polyribonucleotide nucleotidyltransferase (704 aa).

Positions 487 and 493 each coordinate Mg(2+). Residues 554–613 (PRLLTIKIHPDKIREVIGKGGSTIQAITKETGTQIDIQDDGTIIIASVNAIAAQAAKSRI) form the KH domain. The region spanning 623–691 (GRIYEGKVAK…KQGRIRLSIK (69 aa)) is the S1 motif domain.

It belongs to the polyribonucleotide nucleotidyltransferase family. As to quaternary structure, component of the RNA degradosome, which is a multiprotein complex involved in RNA processing and mRNA degradation. Mg(2+) is required as a cofactor.

The protein localises to the cytoplasm. The enzyme catalyses RNA(n+1) + phosphate = RNA(n) + a ribonucleoside 5'-diphosphate. Its function is as follows. Involved in mRNA degradation. Catalyzes the phosphorolysis of single-stranded polyribonucleotides processively in the 3'- to 5'-direction. In Xanthomonas campestris pv. campestris (strain B100), this protein is Polyribonucleotide nucleotidyltransferase.